A 275-amino-acid polypeptide reads, in one-letter code: NH(3)-dependent NAD(+) synthetase (275 aa).

Residue 50 to 57 (GISGGVDS) participates in ATP binding. A Mg(2+)-binding site is contributed by Asp-56. Residue Arg-147 participates in deamido-NAD(+) binding. Residue Thr-167 coordinates ATP. Residue Glu-172 participates in Mg(2+) binding. Positions 180 and 187 each coordinate deamido-NAD(+). The ATP site is built by Lys-196 and Thr-218. 267 to 268 (HK) provides a ligand contact to deamido-NAD(+).

Belongs to the NAD synthetase family. Homodimer.

The enzyme catalyses deamido-NAD(+) + NH4(+) + ATP = AMP + diphosphate + NAD(+) + H(+). It participates in cofactor biosynthesis; NAD(+) biosynthesis; NAD(+) from deamido-NAD(+) (ammonia route): step 1/1. Its function is as follows. Catalyzes the ATP-dependent amidation of deamido-NAD to form NAD. Uses ammonia as a nitrogen source. In Pseudomonas syringae pv. syringae (strain B728a), this protein is NH(3)-dependent NAD(+) synthetase.